The primary structure comprises 850 residues: Protein argonaute 8 (850 aa).

Residues methionine 1–asparagine 30 form a disordered region. Residues proline 247 to serine 361 enclose the PAZ domain. Positions glutamine 518–lysine 811 constitute a Piwi domain.

Belongs to the argonaute family. Ago subfamily.

Functionally, involved in RNA-mediated post-transcriptional gene silencing (PTGS). Main component of the RNA-induced silencing complex (RISC) that binds to a short guide RNA such as a microRNA (miRNA) or small interfering RNA (siRNA). RISC uses the mature miRNA or siRNA as a guide for slicer-directed cleavage of homologous mRNAs to repress gene expression. The sequence is that of Protein argonaute 8 (AGO8) from Arabidopsis thaliana (Mouse-ear cress).